Consider the following 359-residue polypeptide: Phospho-N-acetylmuramoyl-pentapeptide-transferase (359 aa).

Over methionine 1–arginine 25 the chain is Periplasmic. A helical membrane pass occupies residues serine 26 to leucine 48. The Cytoplasmic portion of the chain corresponds to arginine 49–proline 74. The muraymycin D2 site is built by lysine 70 and threonine 75. The chain crosses the membrane as a helical span at residues threonine 75 to leucine 92. Residues methionine 93–lysine 98 are Periplasmic-facing. Residues tyrosine 99–valine 120 form a helical membrane-spanning segment. The Cytoplasmic portion of the chain corresponds to lysine 121–isoleucine 130. The chain crosses the membrane as a helical span at residues lysine 131–alanine 152. At aspartate 153–valine 172 the chain is on the periplasmic side. Residues leucine 173 to glycine 194 traverse the membrane as a helical segment. The muraymycin D2 site is built by asparagine 190, aspartate 193, and aspartate 196. At leucine 195 to glycine 197 the chain is on the cytoplasmic side. Residues leucine 198–glycine 218 traverse the membrane as a helical segment. Residues histidine 219–tyrosine 233 are Periplasmic-facing. The chain crosses the membrane as a helical span at residues alanine 234–asparagine 255. The Cytoplasmic segment spans residues serine 256 to glycine 264. The muraymycin D2 site is built by glycine 264 and serine 268. The chain crosses the membrane as a helical span at residues aspartate 265–leucine 280. Topologically, residues leucine 281–serine 284 are periplasmic. Residues glutamate 285–arginine 310 form a helical membrane-spanning segment. Glutamine 305 and alanine 321 together coordinate muraymycin D2. Residues tryptophan 311–leucine 332 lie on the Cytoplasmic side of the membrane. A helical membrane pass occupies residues proline 333–methionine 355. Residues leucine 356–arginine 359 are Periplasmic-facing.

It belongs to the glycosyltransferase 4 family. MraY subfamily. As to quaternary structure, homodimer. The cofactor is Mg(2+). It depends on Mn(2+) as a cofactor.

It localises to the cell inner membrane. It carries out the reaction UDP-N-acetyl-alpha-D-muramoyl-L-alanyl-gamma-D-glutamyl-meso-2,6-diaminopimeloyl-D-alanyl-D-alanine + di-trans,octa-cis-undecaprenyl phosphate = di-trans,octa-cis-undecaprenyl diphospho-N-acetyl-alpha-D-muramoyl-L-alanyl-D-glutamyl-meso-2,6-diaminopimeloyl-D-alanyl-D-alanine + UMP. The protein operates within cell wall biogenesis; peptidoglycan biosynthesis. With respect to regulation, inhibited by natural nucleoside antibiotics including tunicamycin, capuramycin and muraymycin. Usually the cofactor magnesium is not required for antibiotic binding. Catalyzes the initial step of the lipid cycle reactions in the biosynthesis of the cell wall peptidoglycan: transfers peptidoglycan precursor phospho-MurNAc-pentapeptide from UDP-MurNAc-pentapeptide onto the lipid carrier undecaprenyl phosphate, yielding undecaprenyl-pyrophosphoryl-MurNAc-pentapeptide, known as lipid I. This is Phospho-N-acetylmuramoyl-pentapeptide-transferase from Aquifex aeolicus (strain VF5).